Here is a 213-residue protein sequence, read N- to C-terminus: uncharacterized protein (213 aa).

The N-terminal stretch at 1–19 (MKKVLLLLFVLTIGLALSA) is a signal peptide. Cysteine 20 is lipidated: N-palmitoyl cysteine. Cysteine 20 carries the S-diacylglycerol cysteine lipid modification. The interval 20–62 (CSQSSDASEKEKPKEKKSQEELEKELDKELKKGGEPKTKKDDQ) is disordered. Over residues 26–62 (ASEKEKPKEKKSQEELEKELDKELKKGGEPKTKKDDQ) the composition is skewed to basic and acidic residues.

It localises to the cell membrane. This is an uncharacterized protein from Bacillus subtilis (strain 168).